Here is a 320-residue protein sequence, read N- to C-terminus: MKVLWAALLVAFLAGCQGKVEQVVEPELEPEPELHQQADWQSGQPWELALGRFWDYLRWVQTLSEQVQEELLSSQVTQELTALMDETMKELKAYKSELEEQLSPVAEETRARLSKELQAAQARLGADMEDVRSRLAQYRSEVQAMLGQSTEELRARLASHLRKLRKRLLRDVDDLQKRLAVYQAGAREGAERGVSAIRERLGPLVEQGRARAATVGSSLAGQPLQERAQAWGERLRARMEEVGSRTRDRLDEVKEQVEEVRAKLEEQAQQMRLQAEAFQARLKSWFEPLVEDMQRQWAGLVEKVQAAVGASAAPVPSDNH.

The N-terminal stretch at 1–18 is a signal peptide; the sequence is MKVLWAALLVAFLAGCQG. 8 repeat units span residues 82 to 103, 104 to 125, 126 to 147, 148 to 169, 170 to 191, 192 to 213, 214 to 236, and 237 to 258. The tract at residues 82–258 is 8 X 22 AA approximate tandem repeats; the sequence is ALMDETMKEL…RLDEVKEQVE (177 aa). A Methionine sulfoxide modification is found at methionine 145. Residue serine 149 is modified to Phosphoserine. The LDL and other lipoprotein receptors binding stretch occupies residues 160–170; it reads HLRKLRKRLLR. 164–167 provides a ligand contact to heparin; the sequence is LRKR. The tract at residues 212–293 is lipid-binding and lipoprotein association; sequence AATVGSSLAG…SWFEPLVEDM (82 aa). 232-239 is a binding site for heparin; sequence GERLRARM. The segment at 269–320 is homooligomerization; sequence QQMRLQAEAFQARLKSWFEPLVEDMQRQWAGLVEKVQAAVGASAAPVPSDNH. The specificity for association with VLDL stretch occupies residues 281–293; the sequence is RLKSWFEPLVEDM.

It belongs to the apolipoprotein A1/A4/E family. In terms of assembly, homotetramer. May interact with ABCA1; functionally associated with ABCA1 in the biogenesis of HDLs. May interact with APP/A4 amyloid-beta peptide; the interaction is extremely stable in vitro but its physiological significance is unclear. May interact with MAPT. May interact with MAP2. In the cerebrospinal fluid, interacts with secreted SORL1. Interacts with PMEL; this allows the loading of PMEL luminal fragment on ILVs to induce fibril nucleation. In terms of processing, APOE exists as multiple glycosylated and sialylated glycoforms within cells and in plasma. The extent of glycosylation and sialylation are tissue and context specific. Post-translationally, glycated in plasma VLDL. Phosphorylated by FAM20C in the extracellular medium.

It localises to the secreted. It is found in the extracellular space. The protein localises to the extracellular matrix. The protein resides in the extracellular vesicle. Its subcellular location is the endosome. It localises to the multivesicular body. Its function is as follows. APOE is an apolipoprotein, a protein associating with lipid particles, that mainly functions in lipoprotein-mediated lipid transport between organs via the plasma and interstitial fluids. APOE is a core component of plasma lipoproteins and is involved in their production, conversion and clearance. Apolipoproteins are amphipathic molecules that interact both with lipids of the lipoprotein particle core and the aqueous environment of the plasma. As such, APOE associates with chylomicrons, chylomicron remnants, very low density lipoproteins (VLDL) and intermediate density lipoproteins (IDL) but shows a preferential binding to high-density lipoproteins (HDL). It also binds a wide range of cellular receptors including the LDL receptor/LDLR, the LDL receptor-related proteins LRP1, LRP2 and LRP8 and the very low-density lipoprotein receptor/VLDLR that mediate the cellular uptake of the APOE-containing lipoprotein particles. Finally, APOE also has a heparin-binding activity and binds heparan-sulfate proteoglycans on the surface of cells, a property that supports the capture and the receptor-mediated uptake of APOE-containing lipoproteins by cells. A main function of APOE is to mediate lipoprotein clearance through the uptake of chylomicrons, VLDLs, and HDLs by hepatocytes. APOE is also involved in the biosynthesis by the liver of VLDLs as well as their uptake by peripheral tissues ensuring the delivery of triglycerides and energy storage in muscle, heart and adipose tissues. By participating in the lipoprotein-mediated distribution of lipids among tissues, APOE plays a critical role in plasma and tissues lipid homeostasis. APOE is also involved in two steps of reverse cholesterol transport, the HDLs-mediated transport of cholesterol from peripheral tissues to the liver, and thereby plays an important role in cholesterol homeostasis. First, it is functionally associated with ABCA1 in the biogenesis of HDLs in tissues. Second, it is enriched in circulating HDLs and mediates their uptake by hepatocytes. APOE also plays an important role in lipid transport in the central nervous system, regulating neuron survival and sprouting. In Plecturocebus moloch (Dusky titi monkey), this protein is Apolipoprotein E (APOE).